The sequence spans 421 residues: MKMAKKCSVFMLCAAVSLSLAACGPKESSSAKSSSKGSELVVWEDKEKSNGIKDAVAAFEKEHDVKVKVVEKPYAKQIEDLRMDGPAGTGPDVLTMPGDQIGTAVTEGLLKELHVKKDVQSLYTDASIQSQMVDQKLYGLPKAVETTVLFYNKDLITEKELPKTLEEWYDYSKKTADGSKFGFLALFDQIYYAESVMSGYGGYIFGKAKDGSYNPSDIGINNEGAVKGAALIQKFYKDGLFPAGIIGEQGINVLESLFTEGKAAAIISGPWNVEAFSNAGINYGITKLPKLENGKNMSSFIGVKSYNVSAFSKNEELAQELAVFLANEKNSKTRYEETKEVPAVKSLANDPAIMKSEAARAVTEQSRFSEPTPNIPEMNEIWTPADSALQTVATGKADPKQALDQAAETAKGQIKAKHSGK.

A signal peptide spans 1–22 (MKMAKKCSVFMLCAAVSLSLAA). Cys-23 carries N-palmitoyl cysteine lipidation. The S-diacylglycerol cysteine moiety is linked to residue Cys-23. A disordered region spans residues 393 to 421 (ATGKADPKQALDQAAETAKGQIKAKHSGK).

Belongs to the bacterial solute-binding protein 1 family. The complex is composed of two ATP-binding proteins (MsmX), two transmembrane proteins (GanP and GanQ) and a solute-binding protein (GanS).

The protein resides in the cell membrane. Functionally, involved in galactan degradation. Part of the ABC transporter complex GanPQS involved in the uptake of galactooligosaccharides. Binds mainly galactotetraose and galactotriose. The chain is Galactooligosaccharide-binding protein from Bacillus subtilis (strain 168).